A 166-amino-acid chain; its full sequence is MASVNKVILVGNLGRDPEVRYSPDGAAICNVSIATTSQWKDKASGERREETEWHRVVMYNRLAEIAGEYLKKGRSVYIEGRLKTRKWQDKDTGADRYSTEIVADQMQMLGGRDSGGDSGGGYGGGYDDAPRQQRAPAQRPAAAPQRPAPQAAPAANLADMDDDIPF.

Residues 4–110 (VNKVILVGNL…IVADQMQMLG (107 aa)) form the SSB domain. The interval 108–166 (MLGGRDSGGDSGGGYGGGYDDAPRQQRAPAQRPAAAPQRPAPQAAPAANLADMDDDIPF) is disordered. Residues 112 to 126 (RDSGGDSGGGYGGGY) show a composition bias toward gly residues. The segment covering 132–155 (QQRAPAQRPAAAPQRPAPQAAPAA) has biased composition (low complexity). The short motif at 161-166 (DDDIPF) is the Important for interaction with partner proteins element.

Homotetramer.

Plays an important role in DNA replication, recombination and repair. Binds to ssDNA and to an array of partner proteins to recruit them to their sites of action during DNA metabolism. The protein is Single-stranded DNA-binding protein (ssb) of Bordetella bronchiseptica (strain ATCC BAA-588 / NCTC 13252 / RB50) (Alcaligenes bronchisepticus).